Here is a 186-residue protein sequence, read N- to C-terminus: Imidazoleglycerol-phosphate dehydratase (186 aa).

Belongs to the imidazoleglycerol-phosphate dehydratase family.

The protein resides in the cytoplasm. It catalyses the reaction D-erythro-1-(imidazol-4-yl)glycerol 3-phosphate = 3-(imidazol-4-yl)-2-oxopropyl phosphate + H2O. The protein operates within amino-acid biosynthesis; L-histidine biosynthesis; L-histidine from 5-phospho-alpha-D-ribose 1-diphosphate: step 6/9. In Dictyoglomus thermophilum (strain ATCC 35947 / DSM 3960 / H-6-12), this protein is Imidazoleglycerol-phosphate dehydratase.